The chain runs to 295 residues: MSITLSSRGRKIRKLPKSLEFPLDGSIDKLRDEVSSVTRLPVERLRFSTADGTTLLPNTTLRKYGVGPGATIWVKDLGPQIGWRTVFMIEYLGPLVIHLFFILNYKWIYRKDYNLCLNQKIAFVLVMLHFMKREYESIFVHRFSLATMPLRNIFKNCAHYHLLSGLFLAYFIYGPWHANDYIKPNHLLFLIVGWAFAVLSNFRTHIILRDLRPAGSKKRVIPTGYGFNLVSFPNYFFESLGWLFFALLTKSWASWIFLFVGSAQMFVWAKKKHARYLKEFPNYPRSRKIMIPFFL.

The Cytoplasmic segment spans residues 1–84 (MSITLSSRGR…KDLGPQIGWR (84 aa)). A helical transmembrane segment spans residues 85-105 (TVFMIEYLGPLVIHLFFILNY). Residues 106-157 (KWIYRKDYNLCLNQKIAFVLVMLHFMKREYESIFVHRFSLATMPLRNIFKNC) are Lumenal-facing. The chain crosses the membrane as a helical span at residues 158-178 (AHYHLLSGLFLAYFIYGPWHA). Over 179–186 (NDYIKPNH) the chain is Cytoplasmic. Residues 187 to 207 (LLFLIVGWAFAVLSNFRTHII) form a helical membrane-spanning segment. The Lumenal portion of the chain corresponds to 208–223 (LRDLRPAGSKKRVIPT). Residues 224–246 (GYGFNLVSFPNYFFESLGWLFFA) traverse the membrane as a helical segment. Residues 247-250 (LLTK) lie on the Cytoplasmic side of the membrane. A helical transmembrane segment spans residues 251–268 (SWASWIFLFVGSAQMFVW). At 269 to 295 (AKKKHARYLKEFPNYPRSRKIMIPFFL) the chain is on the lumenal side.

It belongs to the steroid 5-alpha reductase family.

The protein localises to the endoplasmic reticulum membrane. It catalyses the reaction a (2E)-enoyl-CoA + NADPH + H(+) = a 2,3-saturated acyl-CoA + NADP(+). This Schizosaccharomyces pombe (strain 972 / ATCC 24843) (Fission yeast) protein is Putative enoyl reductase C646.07c.